Here is a 562-residue protein sequence, read N- to C-terminus: NAD-dependent malic enzyme (562 aa).

The active-site Proton donor is tyrosine 101. Arginine 154 contacts NAD(+). Lysine 172 serves as the catalytic Proton acceptor. 3 residues coordinate a divalent metal cation: glutamate 243, aspartate 244, and aspartate 267. 2 residues coordinate NAD(+): aspartate 267 and asparagine 415.

The protein belongs to the malic enzymes family. Homotetramer. It depends on Mg(2+) as a cofactor. Requires Mn(2+) as cofactor.

It carries out the reaction (S)-malate + NAD(+) = pyruvate + CO2 + NADH. The catalysed reaction is oxaloacetate + H(+) = pyruvate + CO2. The protein is NAD-dependent malic enzyme of Shewanella putrefaciens (strain CN-32 / ATCC BAA-453).